Reading from the N-terminus, the 242-residue chain is Sugar fermentation stimulation protein homolog (242 aa).

This sequence belongs to the SfsA family.

The protein is Sugar fermentation stimulation protein homolog of Enterococcus mundtii.